Reading from the N-terminus, the 180-residue chain is Protein SPO16 homolog (180 aa).

In terms of assembly, homooligomer. Interacts with SHOC, SYCP1 and SYCE3.

It is found in the chromosome. In terms of biological role, plays a key role in reinforcing the integrity of the central element of the synaptonemal complex (SC) thereby stabilizing SC, ensuring progression of meiotic prophase I in male and female germ cells. Promotes homologous recombination and crossing-over in meiotic prophase I via its association with SHOC1. Required for the localization of TEX11 and MSH4 to recombination intermediates. This chain is Protein SPO16 homolog, found in Homo sapiens (Human).